The sequence spans 112 residues: Nucleoid-associated protein lpg2755 (112 aa).

The protein belongs to the YbaB/EbfC family. As to quaternary structure, homodimer.

It localises to the cytoplasm. It is found in the nucleoid. Functionally, binds to DNA and alters its conformation. May be involved in regulation of gene expression, nucleoid organization and DNA protection. This chain is Nucleoid-associated protein lpg2755, found in Legionella pneumophila subsp. pneumophila (strain Philadelphia 1 / ATCC 33152 / DSM 7513).